The sequence spans 550 residues: 2-succinyl-5-enolpyruvyl-6-hydroxy-3-cyclohexene-1-carboxylate synthase (550 aa).

The protein belongs to the TPP enzyme family. MenD subfamily. As to quaternary structure, homodimer. It depends on Mg(2+) as a cofactor. The cofactor is Mn(2+). Requires thiamine diphosphate as cofactor.

The catalysed reaction is isochorismate + 2-oxoglutarate + H(+) = 5-enolpyruvoyl-6-hydroxy-2-succinyl-cyclohex-3-ene-1-carboxylate + CO2. It functions in the pathway quinol/quinone metabolism; 1,4-dihydroxy-2-naphthoate biosynthesis; 1,4-dihydroxy-2-naphthoate from chorismate: step 2/7. It participates in quinol/quinone metabolism; menaquinone biosynthesis. Functionally, catalyzes the thiamine diphosphate-dependent decarboxylation of 2-oxoglutarate and the subsequent addition of the resulting succinic semialdehyde-thiamine pyrophosphate anion to isochorismate to yield 2-succinyl-5-enolpyruvyl-6-hydroxy-3-cyclohexene-1-carboxylate (SEPHCHC). The polypeptide is 2-succinyl-5-enolpyruvyl-6-hydroxy-3-cyclohexene-1-carboxylate synthase (Flavobacterium psychrophilum (strain ATCC 49511 / DSM 21280 / CIP 103535 / JIP02/86)).